Here is a 212-residue protein sequence, read N- to C-terminus: Ribonuclease HII (212 aa).

An RNase H type-2 domain is found at 17–211 (ANLAGIDEAG…VIEALLSLEQ (195 aa)). A divalent metal cation-binding residues include Asp23, Glu24, and Asp120.

It belongs to the RNase HII family. Mn(2+) is required as a cofactor. Mg(2+) serves as cofactor.

The protein localises to the cytoplasm. The catalysed reaction is Endonucleolytic cleavage to 5'-phosphomonoester.. In terms of biological role, endonuclease that specifically degrades the RNA of RNA-DNA hybrids. The protein is Ribonuclease HII of Chloroflexus aurantiacus (strain ATCC 29364 / DSM 637 / Y-400-fl).